The sequence spans 271 residues: Energy-coupling factor transporter ATP-binding protein EcfA (271 aa).

An ABC transporter domain is found at 2 to 231 (ISIQNLTFYY…PLFLQQYKLT (230 aa)). 34–41 (GHNGSGKS) is a binding site for ATP.

Belongs to the ABC transporter superfamily. Energy-coupling factor EcfA family. Forms a stable energy-coupling factor (ECF) transporter complex composed of 2 membrane-embedded substrate-binding proteins (S component), 2 ATP-binding proteins (A component) and 2 transmembrane proteins (T component).

The protein resides in the cell membrane. Its function is as follows. ATP-binding (A) component of a common energy-coupling factor (ECF) ABC-transporter complex. Unlike classic ABC transporters this ECF transporter provides the energy necessary to transport a number of different substrates. The sequence is that of Energy-coupling factor transporter ATP-binding protein EcfA from Aster yellows witches'-broom phytoplasma (strain AYWB).